Reading from the N-terminus, the 751-residue chain is Catalase-peroxidase (751 aa).

The interval 1–21 is disordered; sequence MSNESKCPFHQTAGGGTTNRD. Residues 90 to 244 constitute a cross-link (tryptophyl-tyrosyl-methioninium (Trp-Tyr) (with M-270)); that stretch reads WHSAGTYRIG…LAAVQMGLIY (155 aa). His91 functions as the Proton acceptor in the catalytic mechanism. A cross-link (tryptophyl-tyrosyl-methioninium (Tyr-Met) (with W-90)) is located at residues 244–270; the sequence is YVNPEGPEGNPDPVASGKDIRETFGRM. His285 lines the heme b pocket. Positions 365-390 are disordered; it reads AHQWRPKEGKGAGTVPDAHDPGKKHA.

This sequence belongs to the peroxidase family. Peroxidase/catalase subfamily. Homodimer or homotetramer. Requires heme b as cofactor. Post-translationally, formation of the three residue Trp-Tyr-Met cross-link is important for the catalase, but not the peroxidase activity of the enzyme.

The catalysed reaction is H2O2 + AH2 = A + 2 H2O. It carries out the reaction 2 H2O2 = O2 + 2 H2O. Functionally, bifunctional enzyme with both catalase and broad-spectrum peroxidase activity. In Pseudomonas putida (strain GB-1), this protein is Catalase-peroxidase.